The primary structure comprises 40 residues: Dolichyl-diphosphooligosaccharide--protein glycosyltransferase subunit 4 (40 aa).

The Lumenal segment spans residues 1-4 (MISD). The chain crosses the membrane as a helical span at residues 5-25 (VQLAIFSNVLGVFLFLLVVAY). Residues 26-40 (HYINANTGKPSAKAK) lie on the Cytoplasmic side of the membrane.

This sequence belongs to the OST4 family. Component of the oligosaccharyltransferase (OST) complex.

The protein resides in the endoplasmic reticulum membrane. In terms of biological role, subunit of the oligosaccharyl transferase (OST) complex that catalyzes the initial transfer of a defined glycan (Glc(3)Man(9)GlcNAc(2) in eukaryotes) from the lipid carrier dolichol-pyrophosphate to an asparagine residue within an Asn-X-Ser/Thr consensus motif in nascent polypeptide chains, the first step in protein N-glycosylation. N-glycosylation occurs cotranslationally and the complex associates with the Sec61 complex at the channel-forming translocon complex that mediates protein translocation across the endoplasmic reticulum (ER). All subunits are required for a maximal enzyme activity. In Drosophila yakuba (Fruit fly), this protein is Dolichyl-diphosphooligosaccharide--protein glycosyltransferase subunit 4.